The following is a 257-amino-acid chain: Alkaline phosphatase synthesis transcriptional regulatory protein SphR (257 aa).

A Response regulatory domain is found at 25–148 (RILVVEDEAV…ELVARCRALL (124 aa)). At D83 the chain carries 4-aspartylphosphate. Residues 159 to 257 (PAVLRYEGLK…TVRGFGYRLG (99 aa)) constitute a DNA-binding region (ompR/PhoB-type).

Phosphorylated by SphS.

Functionally, member of the two-component regulatory system SphR/SphS. Response regulator. Involved in inducible production of alkaline phosphatase in response to phosphate limitation as it is directly involved in the regulation of phoA transcription in response to phosphate limitation. Binds to two distinct sites upstream from the phoA promoter. The polypeptide is Alkaline phosphatase synthesis transcriptional regulatory protein SphR (sphR) (Synechococcus elongatus (strain ATCC 33912 / PCC 7942 / FACHB-805) (Anacystis nidulans R2)).